We begin with the raw amino-acid sequence, 177 residues long: Putative adenylate kinase (177 aa).

ATP is bound by residues G10, G12, K13, T14, and T15. The segment at N30–I50 is NMP. The interval E99–E109 is LID. ATP is bound by residues R100 and K138.

This sequence belongs to the adenylate kinase family. AK6 subfamily. In terms of assembly, interacts with uS11. Not a structural component of 40S pre-ribosomes, but transiently interacts with them by binding to uS11.

It catalyses the reaction AMP + ATP = 2 ADP. The catalysed reaction is ATP + H2O = ADP + phosphate + H(+). In terms of biological role, broad-specificity nucleoside monophosphate (NMP) kinase that catalyzes the reversible transfer of the terminal phosphate group between nucleoside triphosphates and monophosphates. Also has ATPase activity. Involved in the late maturation steps of the 30S ribosomal particles, specifically 16S rRNA maturation. While NMP activity is not required for ribosome maturation, ATPase activity is. Associates transiently with small ribosomal subunit protein uS11. ATP hydrolysis breaks the interaction with uS11. May temporarily remove uS11 from the ribosome to enable a conformational change of the ribosomal RNA that is needed for the final maturation step of the small ribosomal subunit. The chain is Putative adenylate kinase from Thermococcus kodakarensis (strain ATCC BAA-918 / JCM 12380 / KOD1) (Pyrococcus kodakaraensis (strain KOD1)).